The primary structure comprises 466 residues: Glutamate--tRNA ligase 1 (466 aa).

Residues 10–20 (PSPTGLIHLGN) carry the 'HIGH' region motif. Zn(2+)-binding residues include Cys-103, Cys-105, Cys-130, and His-132. Positions 247–251 (PLSKR) match the 'KMSKS' region motif. Lys-250 serves as a coordination point for ATP.

The protein belongs to the class-I aminoacyl-tRNA synthetase family. Glutamate--tRNA ligase type 1 subfamily. In terms of assembly, monomer. The cofactor is Zn(2+).

It localises to the cytoplasm. The catalysed reaction is tRNA(Glu) + L-glutamate + ATP = L-glutamyl-tRNA(Glu) + AMP + diphosphate. Functionally, catalyzes the attachment of glutamate to tRNA(Glu) in a two-step reaction: glutamate is first activated by ATP to form Glu-AMP and then transferred to the acceptor end of tRNA(Glu). In Methylococcus capsulatus (strain ATCC 33009 / NCIMB 11132 / Bath), this protein is Glutamate--tRNA ligase 1.